The following is a 328-amino-acid chain: MARSGGNDGHEEELDPELFEEPSNLEGYEDGEFEEDEEEFEEEEEELEEEEDEEEEEEENVTTDEQSGSPKSSQPVKLQSSDVLDCPTCCEPLKRPIYQCSNGHLACSSCCQKLNKKCSFCRCNIGDIRCRAMEKVIEASIVPCPNAKHGCKETTTYCNQSSHEKVCKFVRCSCPVSNCNYVSSYSNLKSHACSTAHVWGEDDIHFQLVIDRPRIFNMNLGRKKTVVFKEEKEGDLIVVQAFKGLEGVYVTVNRIAHMAPGIRDLSCSLAKLNEYSTLRSGSLVKKIQKVREKMHLEDDLMWIPPKMLSGDHWKMQICIAYGYKFIHI.

The tract at residues 1–77 is disordered; sequence MARSGGNDGH…GSPKSSQPVK (77 aa). Acidic residues-rich tracts occupy residues 10-20 and 27-62; these read HEEELDPELFE and GYEDGEFEEDEEEFEEEEEELEEEEDEEEEEEENVT. Over residues 63-77 the composition is skewed to polar residues; sequence TDEQSGSPKSSQPVK. The RING-type; degenerate zinc finger occupies 86–122; it reads CPTCCEPLKRPIYQCSNGHLACSSCCQKLNKKCSFCR. Residues 136 to 324 form an SBD region; the sequence is VIEASIVPCP…MQICIAYGYK (189 aa). The SIAH-type; degenerate zinc finger occupies 139–197; the sequence is ASIVPCPNAKHGCKETTTYCNQSSHEKVCKFVRCSCPVSNCNYVSSYSNLKSHACSTAH. Zn(2+) is bound by residues cysteine 144, cysteine 151, histidine 163, cysteine 167, cysteine 174, cysteine 179, histidine 191, and histidine 197.

It belongs to the SINA (Seven in absentia) family.

The enzyme catalyses S-ubiquitinyl-[E2 ubiquitin-conjugating enzyme]-L-cysteine + [acceptor protein]-L-lysine = [E2 ubiquitin-conjugating enzyme]-L-cysteine + N(6)-ubiquitinyl-[acceptor protein]-L-lysine.. It participates in protein modification; protein ubiquitination. Functionally, E3 ubiquitin-protein ligase that mediates ubiquitination and subsequent proteasomal degradation of target proteins. E3 ubiquitin ligases accept ubiquitin from an E2 ubiquitin-conjugating enzyme in the form of a thioester and then directly transfers the ubiquitin to targeted substrates. It probably triggers the ubiquitin-mediated degradation of different substrates. The protein is E3 ubiquitin-protein ligase SINA-like 5 of Arabidopsis thaliana (Mouse-ear cress).